Here is a 72-residue protein sequence, read N- to C-terminus: Large ribosomal subunit protein uL29 (72 aa).

It belongs to the universal ribosomal protein uL29 family.

This Caldicellulosiruptor bescii (strain ATCC BAA-1888 / DSM 6725 / KCTC 15123 / Z-1320) (Anaerocellum thermophilum) protein is Large ribosomal subunit protein uL29.